The sequence spans 480 residues: F-box only protein 3 (480 aa).

The F-box domain occupies 10–56; that stretch reads LLTLESLPTDPLLLILSFVDYRDLINCCYVSRRLSQLSTHDPLWRRH. The ApaG domain occupies 278–408; it reads VATTGDITVS…FHMACPTFRV (131 aa). Acidic residues predominate over residues 419–458; the sequence is EYEEMEEEAEEEEEEENDDSADMDESDESDADENESDEGE. The tract at residues 419 to 463 is disordered; that stretch reads EYEEMEEEAEEEEEEENDDSADMDESDESDADENESDEGEGEARR.

In terms of assembly, part of a SCF (SKP1-cullin-F-box) protein ligase complex SCF(FBXO3) consisting of FBXO3, SKP1, CUL1 and RBX1. Interacts with PML, interaction is direct and takes place either alone or within the SCF complex.

Its subcellular location is the nucleus. Its pathway is protein modification; protein ubiquitination. Substrate recognition component of the SCF (SKP1-CUL1-F-box protein)-type E3 ubiquitin ligase complex, SCF(FBXO3), which mediates the ubiquitination and subsequent proteasomal degradation of target proteins. Mediates the ubiquitination of HIPK2 and probably that of EP300, leading to rapid degradation by the proteasome. In the presence of PML, HIPK2 ubiquitination still occurs, but degradation is prevented. PML, HIPK2 and FBXO3 may act synergically to activate p53/TP53-dependent transactivation. The SCF(FBXO3) also acts as a regulator of inflammation by mediating ubiquitination and degradation of FBXL2: specifically recognizes FBXL2 phosphorylated at 'Thr-404' and promotes its ubiquitination. This chain is F-box only protein 3 (Fbxo3), found in Mus musculus (Mouse).